Here is an 86-residue protein sequence, read N- to C-terminus: Neurotoxin LmNaTx1 (86 aa).

A signal peptide spans 1 to 18 (MKILIIFVIAITVVGVQS). The 67-residue stretch at 19–85 (KDGYPIYSTG…VWTYAENTCG (67 aa)) folds into the LCN-type CS-alpha/beta domain. 4 cysteine pairs are disulfide-bonded: Cys-33/Cys-84, Cys-37/Cys-58, Cys-44/Cys-65, and Cys-48/Cys-67. Cys-84 carries the post-translational modification Cysteine amide.

It belongs to the long (4 C-C) scorpion toxin superfamily. Sodium channel inhibitor family. Beta subfamily. As to expression, expressed by the venom gland.

Its subcellular location is the secreted. Binds voltage-independently at site-4 of sodium channels (Nav) and shift the voltage of activation toward more negative potentials thereby affecting sodium channel activation and promoting spontaneous and repetitive firing. The polypeptide is Neurotoxin LmNaTx1 (Lychas mucronatus (Chinese swimming scorpion)).